The chain runs to 607 residues: Elongation factor 4 (607 aa).

The tr-type G domain maps to 11–193; sequence GKIRNFSIIA…QIVEKVPAPT (183 aa). GTP is bound by residues 23–28 and 140–143; these read DHGKST and NKID.

It belongs to the TRAFAC class translation factor GTPase superfamily. Classic translation factor GTPase family. LepA subfamily.

It is found in the cell membrane. The catalysed reaction is GTP + H2O = GDP + phosphate + H(+). Its function is as follows. Required for accurate and efficient protein synthesis under certain stress conditions. May act as a fidelity factor of the translation reaction, by catalyzing a one-codon backward translocation of tRNAs on improperly translocated ribosomes. Back-translocation proceeds from a post-translocation (POST) complex to a pre-translocation (PRE) complex, thus giving elongation factor G a second chance to translocate the tRNAs correctly. Binds to ribosomes in a GTP-dependent manner. This is Elongation factor 4 from Streptococcus pneumoniae (strain Taiwan19F-14).